We begin with the raw amino-acid sequence, 713 residues long: Methionine--tRNA ligase (713 aa).

Positions 17–27 (PYANGPIHIGH) match the 'HIGH' region motif. The Zn(2+) site is built by Cys149, Cys152, Cys162, and Cys165. A 'KMSKS' region motif is present at residues 345 to 349 (KLSTS). Position 348 (Thr348) interacts with ATP. The disordered stretch occupies residues 530–564 (VRTSTPDDDPAGAVGWEDAGAPLLPAGHPIPSGPD). The 100-residue stretch at 614-713 (DFTQLDLRAG…TEAEDGSVVR (100 aa)) folds into the tRNA-binding domain.

The protein belongs to the class-I aminoacyl-tRNA synthetase family. MetG type 1 subfamily. In terms of assembly, homodimer. Zn(2+) is required as a cofactor.

It is found in the cytoplasm. It carries out the reaction tRNA(Met) + L-methionine + ATP = L-methionyl-tRNA(Met) + AMP + diphosphate. Its function is as follows. Is required not only for elongation of protein synthesis but also for the initiation of all mRNA translation through initiator tRNA(fMet) aminoacylation. The protein is Methionine--tRNA ligase of Salinibacter ruber (strain DSM 13855 / M31).